The primary structure comprises 73 residues: Large ribosomal subunit protein bL31 (73 aa).

The protein belongs to the bacterial ribosomal protein bL31 family. Type A subfamily. In terms of assembly, part of the 50S ribosomal subunit.

Binds the 23S rRNA. In Paracoccus denitrificans (strain Pd 1222), this protein is Large ribosomal subunit protein bL31.